Here is a 248-residue protein sequence, read N- to C-terminus: mRNA-decapping protein OPG122 (248 aa).

Residues His-45–Lys-227 enclose the Nudix hydrolase domain. Positions Gly-126–Asn-147 match the Nudix box motif. Glu-132 lines the Mg(2+) pocket. Glu-141 acts as the Nucleophile in catalysis. Glu-145 provides a ligand contact to Mn(2+). Asp-167 is a binding site for Mg(2+).

This sequence belongs to the Nudix hydrolase family. The cofactor is Mg(2+). It depends on Mn(2+) as a cofactor.

It is found in the host mitochondrion. In terms of biological role, decapping enzyme that remove the protective 5'-cap from both host and viral mRNAs to commit transcripts for decay by the cellular exonuclease XRN1. Preferentially targets spliced mRNAs and since all viral genes are intronless, it preferentially targets host over viral transcripts. Acceleration of the turnover of cellular transcripts promotes the shutoff of host protein synthesis and therefore diminish the magnitude of antiviral response. The protein is mRNA-decapping protein OPG122 (OPG122) of Vaccinia virus (strain Copenhagen) (VACV).